The primary structure comprises 696 residues: F-box/LRR-repeat protein 5 (696 aa).

Positions Met-1–Ser-159 are hemerythrin-like. Fe(3+) contacts are provided by His-15, His-57, Glu-58, Glu-61, His-80, His-126, and Glu-130. Positions Ser-205–Leu-251 constitute an F-box domain. LRR repeat units follow at residues Ser-343–Thr-367, Gln-368–Gly-395, Cys-396–Glu-421, Cys-582–Gly-612, Cys-613–Gly-640, and Cys-641–Tyr-666. 4 residues coordinate [2Fe-2S] cluster: Cys-667, Cys-681, Cys-691, and Cys-692.

Part of a SCF (SKP1-cullin-F-box) protein ligase complex. The cofactor is [2Fe-2S] cluster. Ubiquitinated upon iron and oxygen depletion, leading to its degradation by the proteasome. Ubiquitination is regulated by the hemerythrin-like region that acts as an oxygen and iron sensor.

It localises to the cytoplasm. It is found in the perinuclear region. The protein resides in the nucleus. It participates in protein modification; protein ubiquitination. Component of some SCF (SKP1-cullin-F-box) protein ligase complex that plays a central role in iron homeostasis by promoting the ubiquitination and subsequent degradation of ireb2/irp2. Upon high iron and oxygen level, it specifically recognizes and binds ireb2/irp2, promoting its ubiquitination and degradation by the proteasome. The protein is F-box/LRR-repeat protein 5 (fbxl5) of Salmo salar (Atlantic salmon).